A 40-amino-acid polypeptide reads, in one-letter code: Sulfur globule protein TR0 (40 aa).

To C.vinosum CV1 and CV2. In terms of assembly, the protein envelope of the sulfur globules is composed of the three different proteins TR0, TR1 and TR2.

In terms of biological role, structural protein of the sulfur globules, which are intracellular globules that serve for sulfur storage in purple sulfur bacteria. The polypeptide is Sulfur globule protein TR0 (Thiocapsa roseopersicina).